Consider the following 96-residue polypeptide: UPF0235 protein Sputw3181_1321 (96 aa).

The protein belongs to the UPF0235 family.

The chain is UPF0235 protein Sputw3181_1321 from Shewanella sp. (strain W3-18-1).